The sequence spans 1218 residues: MSRLLWKKVAGAKVASGPVPATARWVASSVLDPVPSDGRPPSQMPSSENGQLRLNPLLIQMLSRGLHEQIFGCGGEMPDEAAVQRSVEHLQKHGLWGQPATPLPDVELRLPRLFGGNLDQHFRLLAQKQSLPYLEAAASLLEAQLPPEPKSWAWAEGWTRYGPEGEAEPVAIPEERALVFDVEVCLAEGTCPTLAVAISPSAWYSWCSRRLVEERYSWTSQLSPADLIPLGGSTSASSSTKQDGQEQLVVGHNVSFDRAHIREQYLIQDSRMRFLDTMSMHMAISGLSSFQRSLWMGAKQGKHKNPAAHKARAEVPEESQWSSESSSWDWMDISSANNLADVHNLYVGGPPLEKEPRELFVKGSMRDIRENFQDLMQYCARDVWATFEVFQQQLPLFLERCPHPVTLAGMLEMGVSYLPVNQNWERYLTEAQNTYEELQREMKKSLMDLANDACQLLSGERYKEDPWLWDLEWDLQEFKQKKAKKVKKPASASKLPIEGAGPFGDPMDQEDPGPPSEEEELQRSVTAHNRLQQLRSTTDLLPKRPQHLPGHPGWYRQLCPRLDDPAWAPGPSLLSLQMRVTPKLMALTWDGFPLHYSDSHGWGYLVPGRRDNLTEPPVSPTVESAAVTCPYRAIESLYRKHCLEQGKQQLEPQEVDLAEEFLLTDNSAMWQTVEELGCLDVEAEAKMENSGLSQPLVLPAACAPKSSQPTYHHGNGPYNDVNIPGCWFFKLPHKDGNNYNVGSPFAKDFLPKMEDGTLQAGPGGASGPRALEINKMISFWRNAHKRISSQMVVWLPRSALPRVVTRHPAFDEEGHYGAILPQVVTAGTITRRAVEPTWLTASNARPDRVGSELKAMVQAPPGYVLVGADVDSQELWIAAVLGDAHFAGMHGCTAFGWMTLQGRKSRGTDLHSKTAATVGISREHAKIFNYGRIYGAGQSFAERLLMQFNHRLTRQEAAEKAQQMYAVTKGLRRYRLSADGEWLVKQLNLPVDRTEDGWVSLQDLRMIRREASRKSRWKKWEVAAERAWTGGTESEMFNKLESIAMSDTPRTPVLGCCISRALEPSVVQGEFITSRVNWVVQSSAVDYLHLMLVAMKWLFEEFAIDGRFCISIHDEVRYLVREEDRYRAALALQITNLLTRCMFAYKLGLNDLPQSVAFFSAVDIDQCLRKEVTMDCKTPSNPTGMERRYGIPQGEALDIYQIIELTKGSLEKRSQPGP.

Residues 31–50 (LDPVPSDGRPPSQMPSSENG) are disordered. The Exo I motif lies at 179-183 (VFDVE). The active-site Exonuclease activity is aspartate 181. An Exo II motif is present at residues 250-258 (VGHNVSFDR). Position 289 (serine 289) interacts with DNA. Residues 378–386 (YCARDVWAT) carry the Exo III motif. The disordered stretch occupies residues 484–524 (KKVKKPASASKLPIEGAGPFGDPMDQEDPGPPSEEEELQRS). Residues 492–553 (ASKLPIEGAG…RPQHLPGHPG (62 aa)) form an accessory-interacting determinant region. The span at 507–520 (MDQEDPGPPSEEEE) shows a compositional bias: acidic residues. Arginine 561 contributes to the RNA binding site. A DNA-binding site is contributed by serine 575. 3 residues coordinate RNA: histidine 733, glycine 742, and lysine 747. DNA-binding residues include lysine 785 and threonine 828. A trigger loop region spans residues 837–843 (TWLTASN). RNA contacts are provided by serine 842 and arginine 848. The short motif at 866-875 (VGADVDSQEL) is the Pol A element. Residues aspartate 869, valine 870, serine 872, glutamate 874, arginine 922, lysine 926, and tyrosine 930 each contribute to the a 2'-deoxyribonucleoside 5'-triphosphate site. Mg(2+) contacts are provided by aspartate 869 and valine 870. A Pol B motif is present at residues 922 to 937 (REHAKIFNYGRIYGAG). DNA is bound by residues threonine 1073 and serine 1074. A Pol C motif is present at residues 1113–1120 (HDEVRYLV). Residue aspartate 1114 participates in a 2'-deoxyribonucleoside 5'-triphosphate binding. Mg(2+) is bound at residue aspartate 1114.

This sequence belongs to the DNA polymerase type-A family. Heterotrimer composed of a catalytic subunit and a homodimer of accessory subunits (POLG:POLG2). Interacts with TTC3. Interacts with LIG3. Requires Mg(2+) as cofactor.

It is found in the mitochondrion. The protein resides in the mitochondrion matrix. It localises to the mitochondrion nucleoid. It catalyses the reaction DNA(n) + a 2'-deoxyribonucleoside 5'-triphosphate = DNA(n+1) + diphosphate. The enzyme catalyses a 3'-end 2'-deoxyribonucleotidyl-deoxyribonucleotide-DNA + H2O = a 3'-end 2'-deoxyribonucleotide-DNA + a 2'-deoxyribonucleoside 5'-phosphate + H(+). It carries out the reaction a 5'-end 2'-deoxyribose-2'-deoxyribonucleotide-DNA = (2E,4S)-4-hydroxypenten-2-al-5-phosphate + a 5'-end 5'-phospho-2'-deoxyribonucleoside-DNA + H(+). With respect to regulation, inhibited by dideoxynucleotides such as antiviral agent zalcitabine. Catalytic subunit of DNA polymerase gamma solely responsible for replication of mitochondrial DNA (mtDNA). Replicates both heavy and light strands of the circular mtDNA genome using a single-stranded DNA template, RNA primers and the four deoxyribonucleoside triphosphates as substrates. Has 5' -&gt; 3' polymerase activity. Functionally interacts with TWNK and SSBP1 at the replication fork to form a highly processive replisome, where TWNK unwinds the double-stranded DNA template prior to replication and SSBP1 covers the parental heavy strand to enable continuous replication of the entire mitochondrial genome. A single nucleotide incorporation cycle includes binding of the incoming nucleotide at the insertion site, a phosphodiester bond formation reaction that extends the 3'-end of the primer DNA, and translocation of the primer terminus to the post-insertion site. After completing replication of a mtDNA strand, mediates 3' -&gt; 5' exonucleolytic degradation at the nick to enable proper ligation. Highly accurate due to high nucleotide selectivity and 3' -&gt; 5' exonucleolytic proofreading. Proficiently corrects base substitutions, single-base additions and deletions in non-repetitive sequences and short repeats, but displays lower proofreading activity when replicating longer homopolymeric stretches. Exerts exonuclease activity toward single-stranded DNA and double-stranded DNA containing 3'-terminal mispairs. When a misincorporation occurs, transitions from replication to a pro-nucleolytic editing mode and removes the missincorporated nucleoside in the exonuclease active site. Proceeds via an SN2 nucleolytic mechanism in which Asp-198 catalyzes phosphodiester bond hydrolysis and Glu-200 stabilizes the leaving group. As a result the primer strand becomes one nucleotide shorter and is positioned in the post-insertion site, ready to resume DNA synthesis. Exerts 5'-deoxyribose phosphate (dRP) lyase activity and mediates repair-associated mtDNA synthesis (gap filling) in base-excision repair pathway. Catalyzes the release of the 5'-terminal 2-deoxyribose-5-phosphate sugar moiety from incised apurinic/apyrimidinic (AP) sites to produce a substrate for DNA ligase. The dRP lyase reaction does not require divalent metal ions and likely proceeds via a Schiff base intermediate in a beta-elimination reaction mechanism. This chain is DNA polymerase subunit gamma-1, found in Mus musculus (Mouse).